The chain runs to 860 residues: Transforming growth factor-beta receptor-associated protein 1 (860 aa).

The 274-residue stretch at 24-297 folds into the CNH domain; sequence HISIECVECC…HILQDFEGRV (274 aa). Residues 564-732 form a CHCR repeat; it reads RPLDEQQQTS…YLRAGPSAQD (169 aa).

The protein belongs to the TRAP1 family. As to quaternary structure, interacts with TGFBR2 and ACVR2B; in the absence of ligand stimulation. Interacts with TGFBR1, ACVRL1, BMPR1A and ACVR1B; in the absence of ligand stimulation and to a less extent. Interacts with SMAD4; the interaction seems to be mutually exclusive with the interaction of SMAD4 and phosphorylated SMAD2. May interact with ALOX5. Interacts with RAB5C. Interacts with VPS8, VPS11 and VPS16. Component of the putative class C core vacuole/endosome tethering (CORVET) complex; the core of which composed of the class C Vps proteins VPS11, VPS16, VPS18 and VPS33A, is associated with VPS8 and TGFBRAP1.

It is found in the cytoplasm. The protein localises to the early endosome. Its function is as follows. Plays a role in the TGF-beta/activin signaling pathway. It associates with inactive heteromeric TGF-beta and activin receptor complexes, mainly through the type II receptor, and is released upon activation of signaling. May recruit SMAD4 to the vicinity of the receptor complex and facilitate its interaction with receptor-regulated Smads, such as SMAD2. Plays a role in vesicle-mediated protein trafficking of the endocytic membrane transport pathway. Believed to act as a component of the putative CORVET endosomal tethering complexes which is proposed to be involved in the Rab5-to-Rab7 endosome conversion probably implicating MON1A/B, and via binding SNAREs and SNARE complexes to mediate tethering and docking events during SNARE-mediated membrane fusion. The CORVET complex is proposed to function as a Rab5 effector to mediate early endosome fusion probably in specific endosome subpopulations. Functions predominantly in APPL1-containing endosomes and in degradative but not recycling trafficking of endocytosed cargo. The protein is Transforming growth factor-beta receptor-associated protein 1 (Tgfbrap1) of Mus musculus (Mouse).